The following is an 855-amino-acid chain: Mitofusin FZO1 (855 aa).

Residues 1 to 19 (MSEGKQQFKDSNKPHKDST) show a composition bias toward basic and acidic residues. Residues 1 to 27 (MSEGKQQFKDSNKPHKDSTDQDDDAAT) are disordered. Residues 1-705 (MSEGKQQFKD…PSLLFTSKIP (705 aa)) are Cytoplasmic-facing. Residues 91 to 190 (NYNNNRVLLK…KRVDDVSSKV (100 aa)) are HRN. The region spanning 184–467 (DDVSSKVFIT…KKRSLSKLLP (284 aa)) is the Dynamin-type G domain. Residues 197–202 (NTGKSA) and 370–373 (KKFD) each bind GTP. Residue Lys-398 forms a Glycyl lysine isopeptide (Lys-Gly) (interchain with G-Cter in ubiquitin) linkage. Ser-408 is a GTP binding site. Basic and acidic residues predominate over residues 413 to 433 (ELPHYHNENDNEDHGDRKPDD). The interval 413 to 447 (ELPHYHNENDNEDHGDRKPDDDPYSSSDPDPDFDS) is disordered. Residue Lys-464 forms a Glycyl lysine isopeptide (Lys-Gly) (interchain with G-Cter in ubiquitin) linkage. The tract at residues 484–547 (KSNMKMYSEE…KEALLNALDV (64 aa)) is HR1. Residues 630–843 (GKRLKVSLSI…QSLYEGTVAQ (214 aa)) are required for interaction with UGO1. The chain crosses the membrane as a helical span at residues 706-726 (TLTLYFLGSTKVVGNIILNGI). The Mitochondrial intermembrane portion of the chain corresponds to 727 to 736 (KLSSWSSLKK). A helical membrane pass occupies residues 737-757 (LSVPVIVVGSLLGLTYLIHDL). Over 758–855 (PRALPMNLSI…MVEEINLDID (98 aa)) the chain is Cytoplasmic. Residues 769 to 831 (YKRKLQELDY…KKESNLLSIK (63 aa)) are HR2. A coiled-coil region spans residues 798 to 825 (TREILRSCEIIMDKKQITKKELENKKES).

The protein belongs to the TRAFAC class dynamin-like GTPase superfamily. Dynamin/Fzo/YdjA family. Mitofusin subfamily. As to quaternary structure, homodimer. Dimerization depends on GTP binding. Component of a large multiprotein complex of 800 kDa. Binds the cytoplasmic domain of UGO1 which binds MGM1 through its intermembrane space domain. Interacts with MDM30. Interacts with UBP2 and UBP12. Interacts (when ubiquitinated) with DOA1; the interaction recruits FZO1 to CDC48 and promotes FZO1 proteasomal degradation. Post-translationally, ubiquitinated at Lys-398 and Lys-464. MDM30 and UGO1 are involved in ubiquitination. Deubiquitinated by UBP2 and UBP12. UBP2 and UBP12 recognize distinct ubiquitin chains on FZO1 that have opposing effects on mitochondrial fusion. UBP2 removes ubiquitin chains that initiate proteolysis of FZO1 and inhibit fusion. UBP12 recognizes ubiquitin chains that stabilize FZO1 and promote mitochondrial fusion. UBP12 deubiquitylates FZO1 only after oligomerization.

It is found in the mitochondrion outer membrane. It catalyses the reaction GTP + H2O = GDP + phosphate + H(+). In terms of biological role, essential transmembrane GTPase, which mediates mitochondrial fusion. Fusion proceeds through several steps; first mitochondria are tethered together, then brought into close contact, followed by the formation of a docking ring around contact areas, and finally membrane fusion. Fusion of mitochondria occurs in many cell types and constitutes an important step in mitochondrial morphology, which is balanced between fusion and fission, mediated by FZO1 and DNM1, respectively. Functions antagonistically with DNM1. Probably acts by forming membrane contact sites that mediate mitochondrial membrane fusion. Mitochondrial docking and fusion requires GTP hydrolysis. Mitochondrial fusion also promotes increased lifespan. In Saccharomyces cerevisiae (strain ATCC 204508 / S288c) (Baker's yeast), this protein is Mitofusin FZO1 (FZO1).